A 368-amino-acid chain; its full sequence is Cytochrome b (368 aa).

Helical transmembrane passes span 33–53 (FGSLLGLCLITQILTGIFLAM), 77–99 (WLIRSIHANSASMFFICIYTHTG), 112–132 (TWMVGVTLLLITILTAFLGYV), and 178–198 (FYALHFLFPFLISALSLMHII). Positions 83 and 97 each coordinate heme b. His-182 and His-196 together coordinate heme b. Position 201 (His-201) interacts with a ubiquinone. 4 consecutive transmembrane segments (helical) span residues 224-244 (FSAKDLIGVILLWIMLGSVVL), 288-308 (LGGVLALIMSIAILYFLPMMN), 323-343 (IAFWLLVTNFIVLMWIGSKPV), and 345-365 (SPFEEIGQIMTVTYFSIYMIM).

Belongs to the cytochrome b family. In terms of assembly, the main subunits of complex b-c1 are: cytochrome b, cytochrome c1 and the Rieske protein. Requires heme b as cofactor.

It localises to the mitochondrion inner membrane. Functionally, component of the ubiquinol-cytochrome c reductase complex (complex III or cytochrome b-c1 complex) that is part of the mitochondrial respiratory chain. The b-c1 complex mediates electron transfer from ubiquinol to cytochrome c. Contributes to the generation of a proton gradient across the mitochondrial membrane that is then used for ATP synthesis. This Bugula neritina (Brown bryozoan) protein is Cytochrome b (mt:Cyt-b).